We begin with the raw amino-acid sequence, 251 residues long: Uridylate kinase (251 aa).

26–29 (KLGG) provides a ligand contact to ATP. Position 67 (glycine 67) interacts with UMP. Residues glycine 68 and arginine 72 each contribute to the ATP site. UMP is bound by residues aspartate 87 and 148–155 (MGLPYFST). The ATP site is built by phenylalanine 181 and aspartate 184.

It belongs to the UMP kinase family. In terms of assembly, homohexamer.

It localises to the cytoplasm. It catalyses the reaction UMP + ATP = UDP + ADP. It functions in the pathway pyrimidine metabolism; CTP biosynthesis via de novo pathway; UDP from UMP (UMPK route): step 1/1. Inhibited by UTP. Functionally, catalyzes the reversible phosphorylation of UMP to UDP. The protein is Uridylate kinase of Mycolicibacterium vanbaalenii (strain DSM 7251 / JCM 13017 / BCRC 16820 / KCTC 9966 / NRRL B-24157 / PYR-1) (Mycobacterium vanbaalenii).